The chain runs to 276 residues: Aldo-keto reductase Mjls_1919 (276 aa).

Y50 acts as the Proton donor in catalysis. NADPH contacts are provided by L190, I228, K230, S231, V232, R236, S239, and N240.

This sequence belongs to the aldo/keto reductase family.

This chain is Aldo-keto reductase Mjls_1919, found in Mycobacterium sp. (strain JLS).